The sequence spans 397 residues: Dual-specificity RNA methyltransferase RlmN (397 aa).

Glu116 serves as the catalytic Proton acceptor. One can recognise a Radical SAM core domain in the interval 122 to 366; sequence EDDRGTLCIS…SPIRKTRGDD (245 aa). A disulfide bond links Cys129 and Cys371. 3 residues coordinate [4Fe-4S] cluster: Cys136, Cys140, and Cys143. Residues 195 to 196, Ser227, 249 to 251, and Asn328 each bind S-adenosyl-L-methionine; these read GE and SFH. The S-methylcysteine intermediate role is filled by Cys371.

The protein belongs to the radical SAM superfamily. RlmN family. Requires [4Fe-4S] cluster as cofactor.

It is found in the cytoplasm. It catalyses the reaction adenosine(2503) in 23S rRNA + 2 reduced [2Fe-2S]-[ferredoxin] + 2 S-adenosyl-L-methionine = 2-methyladenosine(2503) in 23S rRNA + 5'-deoxyadenosine + L-methionine + 2 oxidized [2Fe-2S]-[ferredoxin] + S-adenosyl-L-homocysteine. The enzyme catalyses adenosine(37) in tRNA + 2 reduced [2Fe-2S]-[ferredoxin] + 2 S-adenosyl-L-methionine = 2-methyladenosine(37) in tRNA + 5'-deoxyadenosine + L-methionine + 2 oxidized [2Fe-2S]-[ferredoxin] + S-adenosyl-L-homocysteine. Specifically methylates position 2 of adenine 2503 in 23S rRNA and position 2 of adenine 37 in tRNAs. m2A2503 modification seems to play a crucial role in the proofreading step occurring at the peptidyl transferase center and thus would serve to optimize ribosomal fidelity. The polypeptide is Dual-specificity RNA methyltransferase RlmN (Ruegeria sp. (strain TM1040) (Silicibacter sp.)).